The sequence spans 83 residues: Small ribosomal subunit protein bS16 (83 aa).

The protein belongs to the bacterial ribosomal protein bS16 family.

This Shewanella amazonensis (strain ATCC BAA-1098 / SB2B) protein is Small ribosomal subunit protein bS16.